The following is a 273-amino-acid chain: HTH-type transcriptional activator RhaS (273 aa).

The 99-residue stretch at 174 to 272 folds into the HTH araC/xylS-type domain; it reads YQLLDWLQNN…SQSPRDLRSQ (99 aa). 2 consecutive DNA-binding regions (H-T-H motif) follow at residues 191–212 and 239–262; these read PELA…KNKT and VTDI…KREF.

As to quaternary structure, binds DNA as a dimer.

It localises to the cytoplasm. Activates expression of the rhaBAD and rhaT operons. The polypeptide is HTH-type transcriptional activator RhaS (Yersinia pestis bv. Antiqua (strain Antiqua)).